An 83-amino-acid polypeptide reads, in one-letter code: UPF0512 protein W (83 aa).

It belongs to the UPF0512 family.

This chain is UPF0512 protein W, found in Dictyostelium discoideum (Social amoeba).